Reading from the N-terminus, the 123-residue chain is Small ribosomal subunit protein uS12 (123 aa).

D89 carries the post-translational modification 3-methylthioaspartic acid.

The protein belongs to the universal ribosomal protein uS12 family. Part of the 30S ribosomal subunit. Contacts proteins S8 and S17. May interact with IF1 in the 30S initiation complex.

Its function is as follows. With S4 and S5 plays an important role in translational accuracy. In terms of biological role, interacts with and stabilizes bases of the 16S rRNA that are involved in tRNA selection in the A site and with the mRNA backbone. Located at the interface of the 30S and 50S subunits, it traverses the body of the 30S subunit contacting proteins on the other side and probably holding the rRNA structure together. The combined cluster of proteins S8, S12 and S17 appears to hold together the shoulder and platform of the 30S subunit. The polypeptide is Small ribosomal subunit protein uS12 (Citrifermentans bemidjiense (strain ATCC BAA-1014 / DSM 16622 / JCM 12645 / Bem) (Geobacter bemidjiensis)).